The chain runs to 289 residues: MGNQFKTLALLAALSGLLIAISYWVIGGSSGLMIGIGLAAVTNLLSWYQSDKIALAVYRAQAVSESQAPKLYRTVQRLSQRANIPMPGVYIVPGQTANAFATGRDPEHAAVAVTEGILNILPEDELEAVIAHELTHIINRDTLTQAVAATVAGAISFLAQMVSYSLWFGGIGGRDNERGGNPLGVLLTVVLAPIAATIIQLAISRTREFSADAGSARLTGNPRALARALQRLEATARQMPLNANPAFEPLLIINPISGQFLGNLFSSHPSTEARVQALLKLEKQLPTIA.

2 consecutive transmembrane segments (helical) span residues 8–28 and 29–49; these read LALL…VIGG and SSGL…SWYQ. His-132 provides a ligand contact to Zn(2+). Glu-133 is an active-site residue. His-136 is a binding site for Zn(2+). 2 helical membrane-spanning segments follow: residues 151-171 and 183-203; these read VAGA…FGGI and LGVL…QLAI. Glu-208 is a binding site for Zn(2+).

This sequence belongs to the peptidase M48B family. Zn(2+) is required as a cofactor.

Its subcellular location is the cell inner membrane. In Nostoc sp. (strain PCC 7120 / SAG 25.82 / UTEX 2576), this protein is Protease HtpX homolog.